Reading from the N-terminus, the 468-residue chain is 6-phosphogluconate dehydrogenase, decarboxylating (468 aa).

Residues 10–15 (GMAVMG), 33–35 (NRS), 74–76 (VKA), and Asn-102 each bind NADP(+). Residues Asn-102 and 128-130 (SGG) each bind substrate. The active-site Proton acceptor is the Lys-183. Residue 186 to 187 (HN) participates in substrate binding. Catalysis depends on Glu-190, which acts as the Proton donor. 5 residues coordinate substrate: Tyr-191, Lys-260, Arg-287, Arg-445, and His-451.

This sequence belongs to the 6-phosphogluconate dehydrogenase family. As to quaternary structure, homodimer.

It catalyses the reaction 6-phospho-D-gluconate + NADP(+) = D-ribulose 5-phosphate + CO2 + NADPH. The protein operates within carbohydrate degradation; pentose phosphate pathway; D-ribulose 5-phosphate from D-glucose 6-phosphate (oxidative stage): step 3/3. Functionally, catalyzes the oxidative decarboxylation of 6-phosphogluconate to ribulose 5-phosphate and CO(2), with concomitant reduction of NADP to NADPH. This is 6-phosphogluconate dehydrogenase, decarboxylating (gnd) from Escherichia coli.